Reading from the N-terminus, the 623-residue chain is MPHSDELDAGNVLAVENLNIAFMQDQQKIAAVRNLSFSLQRGETLAIVGESGSGKSVTALALMRLLEQAGGLVQCDKMLLQRRSREVIELSEQSAAQMRHVRGADMAMIFQEPMTSLNPVFTVGEQIAESIRLHQNASREEAMVEAKRMLDQVRIPEAQTILSRYPHQLSGGMRQRVMIAMALSCRPAVLIADEPTTALDVTIQAQILQLIKVLQKEMSMGVIFITHDMGVVAEIADRVLVMYQGEAVETGTVEQIFHAPQHPYTRALLAAVPQLGAMKGLDYPRRFPLISLEHPAKQEPPIEQKTVVDGEPVLRVRNLVTRFPLRSGLLNRVTREVHAVEKVSFDLWPGETLSLVGESGSGKSTTGRALLRLVESQGGEIIFNGQRIDTLSPGKLQALRRDIQFIFQDPYASLDPRQTIGDSIIEPLCVHGLLPGKDAAARVAWLLERVGLLPEHAWRYPHEFSGGQRQRICIARALALNPKVIIADEAVSALDVSIRGQIINLLLDLQRDFGIAYLFISHDMAVVERISHRVAVMYLGQIVEIGPRRAVFENPQHPYTRKLLAAVPVAEPSRQRPQRVLLSDDLPSNIHLRGEEVAAVLLQCVGPGHYVAQPQSEYAFMRR.

2 consecutive ABC transporter domains span residues 15 to 269 (VENL…RALL) and 314 to 564 (LRVR…RKLL). Residues 49 to 56 (GESGSGKS) and 357 to 364 (GESGSGKS) contribute to the ATP site.

This sequence belongs to the ABC transporter superfamily. Glutathione importer (TC 3.A.1.5.11) family. As to quaternary structure, the complex is composed of two ATP-binding proteins (GsiA), two transmembrane proteins (GsiC and GsiD) and a solute-binding protein (GsiB).

Its subcellular location is the cell inner membrane. The catalysed reaction is glutathione(out) + ATP + H2O = glutathione(in) + ADP + phosphate + H(+). Its function is as follows. Part of the ABC transporter complex GsiABCD involved in glutathione import. Responsible for energy coupling to the transport system. The sequence is that of Glutathione import ATP-binding protein GsiA from Shigella boydii serotype 4 (strain Sb227).